A 161-amino-acid chain; its full sequence is Regulator of ribonuclease activity A (161 aa).

This sequence belongs to the RraA family. In terms of assembly, homotrimer. Binds to both RNA-binding sites in the C-terminal region of Rne and to RhlB.

It localises to the cytoplasm. Globally modulates RNA abundance by binding to RNase E (Rne) and regulating its endonucleolytic activity. Can modulate Rne action in a substrate-dependent manner by altering the composition of the degradosome. Modulates RNA-binding and helicase activities of the degradosome. This chain is Regulator of ribonuclease activity A, found in Shewanella denitrificans (strain OS217 / ATCC BAA-1090 / DSM 15013).